The sequence spans 613 residues: tRNA (uracil-5-)-methyltransferase homolog A (613 aa).

The disordered stretch occupies residues 1–46 (MSEPAAEVPEPMEDCGQDASAVPSSAAPLCQKEEAGPGPAAGPGTQ). The region spanning 63-136 (FKLELQNVPR…CPLSVRLARP (74 aa)) is the RRM domain. The stretch at 170–200 (YTEQLEQKRLECERVLQKLAKEIGNTNRALL) forms a coiled coil. A Phosphoserine modification is found at Ser368. Positions 401, 451, and 500 each coordinate S-adenosyl-L-methionine. Cys528 serves as the catalytic Nucleophile. Glu571 functions as the Proton acceptor in the catalytic mechanism.

This sequence belongs to the class I-like SAM-binding methyltransferase superfamily. RNA M5U methyltransferase family. As to expression, widely expressed at low level. Expressed at higher level in proliferating cells.

Its subcellular location is the cytoplasm. The protein resides in the cytosol. The catalysed reaction is uridine(54) in tRNA + S-adenosyl-L-methionine = 5-methyluridine(54) in tRNA + S-adenosyl-L-homocysteine + H(+). It catalyses the reaction a uridine in mRNA + S-adenosyl-L-methionine = a 5-methyluridine in mRNA + S-adenosyl-L-homocysteine + H(+). In terms of biological role, S-adenosyl-L-methionine-dependent methyltransferase that catalyzes the formation of 5-methyl-uridine in tRNAs and some mRNAs. Mainly catalyzes the methylation of uridine at position 54 (m5U54) in cytosolic tRNAs. Also able to mediate the formation of 5-methyl-uridine in some mRNAs. This Mus musculus (Mouse) protein is tRNA (uracil-5-)-methyltransferase homolog A.